The following is a 421-amino-acid chain: MLDIQLIRHNLAQTKQKLALRSKGLETLLDHIFELDFKKRSLQSEIEKYRALRNKQSKEIGLKKIKGENVEGQFSELKKMGSRIEEMEKELIQFENQINTLLLSLPNIPHDSVPTGGPEANKVVKTWGEPRQANFPLKTHWELGRELGILDLERGAKLSGSGFSLFTGNGAKLQRALIQFMLTIHTEEHGYKELWPPYLVTEDCMRGTGHLPKFALDMYATDKDNLYLIPTGEVPLTNFHRDEILAESSLPLRYVAYTPCFRREAGSAGKDTRGLLRLHQFDKVELVQITKPENSYTALEEMVSHAENILRSLNLCYRVVLLASQDMGFGAAKCYDLEVWSPGIQSWLEVSSVSNMENFQSRRMNLRYKSSSGKNILCHTLNGSGTALPRLVAAILENYQKEDGRVLIPEKIRTYFKEEYL.

L-serine is bound at residue 231 to 233 (TGE). Position 262–264 (262–264 (RRE)) interacts with ATP. Residue Glu285 participates in L-serine binding. 349–352 (EVSS) contacts ATP. An L-serine-binding site is contributed by Ser384.

This sequence belongs to the class-II aminoacyl-tRNA synthetase family. Type-1 seryl-tRNA synthetase subfamily. In terms of assembly, homodimer. The tRNA molecule binds across the dimer.

Its subcellular location is the cytoplasm. The catalysed reaction is tRNA(Ser) + L-serine + ATP = L-seryl-tRNA(Ser) + AMP + diphosphate + H(+). It catalyses the reaction tRNA(Sec) + L-serine + ATP = L-seryl-tRNA(Sec) + AMP + diphosphate + H(+). It functions in the pathway aminoacyl-tRNA biosynthesis; selenocysteinyl-tRNA(Sec) biosynthesis; L-seryl-tRNA(Sec) from L-serine and tRNA(Sec): step 1/1. Its function is as follows. Catalyzes the attachment of serine to tRNA(Ser). Is also able to aminoacylate tRNA(Sec) with serine, to form the misacylated tRNA L-seryl-tRNA(Sec), which will be further converted into selenocysteinyl-tRNA(Sec). This chain is Serine--tRNA ligase, found in Methylacidiphilum infernorum (isolate V4) (Methylokorus infernorum (strain V4)).